The primary structure comprises 382 residues: Exostosin-1 homolog (382 aa).

Positions 1 to 20 (MQNVMKFHLVIFMLFGSVRL) are cleaved as a signal peptide. Residue asparagine 268 is glycosylated (N-linked (GlcNAc...) asparagine).

This sequence belongs to the glycosyltransferase 47 family. In terms of assembly, interacts with rib-2.

It localises to the endoplasmic reticulum. The protein resides in the golgi apparatus. In terms of biological role, required for the biosynthesis of heparan sulfate by positively regulating N-acetylglucosamine transferase II (GlcNAcT-II) and glucuronyl transferase II (GlcAT-II) activities of glycosyltransferase rib-2. Probably not directly involved in chondroitin sulfate biosynthesis but negatively regulates chondroitin sulfate levels. Maternally required for normal ventral epidermal enclosure and for embryo elongation during the early stages of embryonic development. In addition, involved in the elongation of the pharyngeal isthmus and in the organization of the actin cytoskeleton in the pharyngeal muscles during the later stages embryonic development. In adults, regulates egg-laying and the normal morphogenesis of the vulva. Also involved in the directed migration of hermaphrodite-specific neurons. The protein is Exostosin-1 homolog (rib-1) of Caenorhabditis elegans.